The following is a 410-amino-acid chain: Testis-specific Y-encoded-like protein 6 (410 aa).

Disordered regions lie at residues 1–31 (MSLP…EKSK) and 46–69 (PIVF…DGGH). S9 bears the Phosphoserine mark. Over residues 18–31 (EDPHQGQRSREKSK) the composition is skewed to basic and acidic residues.

Belongs to the nucleosome assembly protein (NAP) family.

The sequence is that of Testis-specific Y-encoded-like protein 6 (TSPYL6) from Homo sapiens (Human).